A 232-amino-acid polypeptide reads, in one-letter code: 5'-methylthioadenosine/S-adenosylhomocysteine nucleosidase (232 aa).

Catalysis depends on E12, which acts as the Proton acceptor. Residues G78, I152, and 173–174 (ME) each bind substrate. The active-site Proton donor is D197.

Belongs to the PNP/UDP phosphorylase family. MtnN subfamily. In terms of assembly, homodimer.

The catalysed reaction is S-adenosyl-L-homocysteine + H2O = S-(5-deoxy-D-ribos-5-yl)-L-homocysteine + adenine. The enzyme catalyses S-methyl-5'-thioadenosine + H2O = 5-(methylsulfanyl)-D-ribose + adenine. It carries out the reaction 5'-deoxyadenosine + H2O = 5-deoxy-D-ribose + adenine. It functions in the pathway amino-acid biosynthesis; L-methionine biosynthesis via salvage pathway; S-methyl-5-thio-alpha-D-ribose 1-phosphate from S-methyl-5'-thioadenosine (hydrolase route): step 1/2. Functionally, catalyzes the irreversible cleavage of the glycosidic bond in both 5'-methylthioadenosine (MTA) and S-adenosylhomocysteine (SAH/AdoHcy) to adenine and the corresponding thioribose, 5'-methylthioribose and S-ribosylhomocysteine, respectively. Also cleaves 5'-deoxyadenosine, a toxic by-product of radical S-adenosylmethionine (SAM) enzymes, into 5-deoxyribose and adenine. Thus, is required for in vivo function of the radical SAM enzymes biotin synthase and lipoic acid synthase, that are inhibited by 5'-deoxyadenosine accumulation. The chain is 5'-methylthioadenosine/S-adenosylhomocysteine nucleosidase from Cronobacter sakazakii (strain ATCC BAA-894) (Enterobacter sakazakii).